The following is a 396-amino-acid chain: Tryptophan synthase beta chain (396 aa).

Lysine 86 is modified (N6-(pyridoxal phosphate)lysine).

It belongs to the TrpB family. In terms of assembly, tetramer of two alpha and two beta chains. Requires pyridoxal 5'-phosphate as cofactor.

The enzyme catalyses (1S,2R)-1-C-(indol-3-yl)glycerol 3-phosphate + L-serine = D-glyceraldehyde 3-phosphate + L-tryptophan + H2O. It functions in the pathway amino-acid biosynthesis; L-tryptophan biosynthesis; L-tryptophan from chorismate: step 5/5. Its function is as follows. The beta subunit is responsible for the synthesis of L-tryptophan from indole and L-serine. The polypeptide is Tryptophan synthase beta chain (Proteus mirabilis (strain HI4320)).